The chain runs to 510 residues: Anaerobic nitric oxide reductase transcription regulator NorR (510 aa).

Residues 188–417 enclose the Sigma-54 factor interaction domain; that stretch reads IIGNSQGMRT…LEHVIKRAAV (230 aa). ATP-binding positions include 216–223 and 279–288; these read GETGVGKE and ADGGTLFLDE. The segment at residues 486–505 is a DNA-binding region (H-T-H motif); that stretch reads WAATARQLELDSGNLHRLAK.

Its pathway is nitrogen metabolism; nitric oxide reduction. Required for the expression of anaerobic nitric oxide (NO) reductase, acts as a transcriptional activator for at least the norVW operon. Activation also requires sigma-54. The polypeptide is Anaerobic nitric oxide reductase transcription regulator NorR (Vibrio vulnificus (strain YJ016)).